The following is a 292-amino-acid chain: tRNA-cytidine(32) 2-sulfurtransferase (292 aa).

Residues 62 to 67 carry the PP-loop motif motif; sequence SGGKDS. 3 residues coordinate [4Fe-4S] cluster: C137, C140, and C228.

It belongs to the TtcA family. As to quaternary structure, homodimer. Mg(2+) is required as a cofactor. It depends on [4Fe-4S] cluster as a cofactor.

The protein resides in the cytoplasm. It carries out the reaction cytidine(32) in tRNA + S-sulfanyl-L-cysteinyl-[cysteine desulfurase] + AH2 + ATP = 2-thiocytidine(32) in tRNA + L-cysteinyl-[cysteine desulfurase] + A + AMP + diphosphate + H(+). It participates in tRNA modification. Functionally, catalyzes the ATP-dependent 2-thiolation of cytidine in position 32 of tRNA, to form 2-thiocytidine (s(2)C32). The sulfur atoms are provided by the cysteine/cysteine desulfurase (IscS) system. The chain is tRNA-cytidine(32) 2-sulfurtransferase from Brucella anthropi (strain ATCC 49188 / DSM 6882 / CCUG 24695 / JCM 21032 / LMG 3331 / NBRC 15819 / NCTC 12168 / Alc 37) (Ochrobactrum anthropi).